Consider the following 230-residue polypeptide: Protein FAM3A (230 aa).

The first 33 residues, 1–33 (MRLAGPLRIVALIIIMGLTWILVTILLGGPGVG), serve as a signal peptide directing secretion. 2 disulfide bridges follow: C59–C87 and C65–C222. The 159-residue stretch at 68–226 (EHLSFRIVSG…LEMEGCIPRR (159 aa)) folds into the GG-type lectin domain.

Belongs to the FAM3 family.

The protein resides in the secreted. This chain is Protein FAM3A (Fam3a), found in Mus musculus (Mouse).